Here is a 455-residue protein sequence, read N- to C-terminus: Membrane-bound lytic murein transglycosylase F (455 aa).

Positions 1–21 are cleaved as a signal peptide; sequence MPKSAVSLFAILLLAASVITA. A non-LT domain region spans residues 22–264; sequence CSPQTRPDAM…HIKEQHFGHV (243 aa). The interval 265–455 is LT domain; it reads KQFNYVTTSL…LKYLDEQGRL (191 aa). Residue glutamate 309 is part of the active site.

The protein in the N-terminal section; belongs to the bacterial solute-binding protein 3 family. This sequence in the C-terminal section; belongs to the transglycosylase Slt family.

Its subcellular location is the cell outer membrane. The catalysed reaction is Exolytic cleavage of the (1-&gt;4)-beta-glycosidic linkage between N-acetylmuramic acid (MurNAc) and N-acetylglucosamine (GlcNAc) residues in peptidoglycan, from either the reducing or the non-reducing ends of the peptidoglycan chains, with concomitant formation of a 1,6-anhydrobond in the MurNAc residue.. Functionally, murein-degrading enzyme that degrades murein glycan strands and insoluble, high-molecular weight murein sacculi, with the concomitant formation of a 1,6-anhydromuramoyl product. Lytic transglycosylases (LTs) play an integral role in the metabolism of the peptidoglycan (PG) sacculus. Their lytic action creates space within the PG sacculus to allow for its expansion as well as for the insertion of various structures such as secretion systems and flagella. The sequence is that of Membrane-bound lytic murein transglycosylase F from Idiomarina loihiensis (strain ATCC BAA-735 / DSM 15497 / L2-TR).